Reading from the N-terminus, the 522-residue chain is 2-isopropylmalate synthase (522 aa).

Residues 5–267 (VIIFDTTLRD…ETGINAKEIH (263 aa)) enclose the Pyruvate carboxyltransferase domain. 4 residues coordinate Mn(2+): D14, H202, H204, and N238. Positions 392–522 (QLQQLVVQSD…MHKNRELGGV (131 aa)) are regulatory domain.

This sequence belongs to the alpha-IPM synthase/homocitrate synthase family. LeuA type 1 subfamily. Homodimer. The cofactor is Mn(2+).

Its subcellular location is the cytoplasm. It catalyses the reaction 3-methyl-2-oxobutanoate + acetyl-CoA + H2O = (2S)-2-isopropylmalate + CoA + H(+). The protein operates within amino-acid biosynthesis; L-leucine biosynthesis; L-leucine from 3-methyl-2-oxobutanoate: step 1/4. Catalyzes the condensation of the acetyl group of acetyl-CoA with 3-methyl-2-oxobutanoate (2-ketoisovalerate) to form 3-carboxy-3-hydroxy-4-methylpentanoate (2-isopropylmalate). The chain is 2-isopropylmalate synthase from Shewanella sp. (strain MR-7).